We begin with the raw amino-acid sequence, 401 residues long: Haptoglobin (401 aa).

A signal peptide spans 1-18 (MSALQAVVTLLLCGQLLA). Sushi domains follow at residues 28 to 83 (DSCP…ECEE) and 85 to 142 (DSCP…ECEA). 3 cysteine pairs are disulfide-bonded: Cys-49/Cys-81, Cys-106/Cys-140, and Cys-144/Cys-261. The region spanning 157–399 (IIGGSLDAKG…ILDWVRKTIA (243 aa)) is the Peptidase S1 domain. Asn-286 and Asn-316 each carry an N-linked (GlcNAc...) asparagine glycan. Disulfide bonds link Cys-304–Cys-335 and Cys-346–Cys-376. Positions 313 to 318 (APKNKT) are interaction with CD163.

The protein belongs to the peptidase S1 family. Tetramer of two alpha and two beta chains; disulfide-linked. The hemoglobin/haptoglobin complex is composed of a haptoglobin dimer bound to two hemoglobin alpha-beta dimers. Interacts with CD163. Interacts with ERGIC3. In terms of tissue distribution, expressed by the liver and secreted in plasma.

The protein resides in the secreted. Its subcellular location is the extracellular space. Its function is as follows. As a result of hemolysis, hemoglobin is found to accumulate in the kidney and is secreted in the urine. Haptoglobin captures, and combines with free plasma hemoglobin to allow hepatic recycling of heme iron and to prevent kidney damage. Haptoglobin also acts as an antioxidant, has antibacterial activity and plays a role in modulating many aspects of the acute phase response. Hemoglobin/haptoglobin complexes are rapidly cleared by the macrophage CD163 scavenger receptor expressed on the surface of liver Kupfer cells through an endocytic lysosomal degradation pathway. This Bos taurus (Bovine) protein is Haptoglobin (HP).